Reading from the N-terminus, the 560-residue chain is Arginine--tRNA ligase (560 aa).

The 'HIGH' region signature appears at 135–145 (ANPTGLLHMGN).

The protein belongs to the class-I aminoacyl-tRNA synthetase family. In terms of assembly, monomer.

Its subcellular location is the cytoplasm. It carries out the reaction tRNA(Arg) + L-arginine + ATP = L-arginyl-tRNA(Arg) + AMP + diphosphate. This Moorella thermoacetica (strain ATCC 39073 / JCM 9320) protein is Arginine--tRNA ligase.